Consider the following 248-residue polypeptide: Tetraspanin-16 (248 aa).

The Cytoplasmic segment spans residues 1-7 (MSEIRTG). A helical transmembrane segment spans residues 8 to 28 (FLTMATIILICIGLTMTGTGL). Over 29-44 (YYRKTVSKCIRETDGS) the chain is Extracellular. A helical membrane pass occupies residues 45 to 65 (FVVIGLLLLVIPQFALYAICC). The Cytoplasmic portion of the chain corresponds to 66-69 (HSKR). The chain crosses the membrane as a helical span at residues 70 to 90 (MFTIYIYAMIFVSIVLGGYSL). Topologically, residues 91–208 (KCFIYNTTFG…MSILKAIVHQ (118 aa)) are extracellular. 2 N-linked (GlcNAc...) asparagine glycosylation sites follow: Asn-96 and Asn-141. The helical transmembrane segment at 209–229 (WKYLSMFSYPALFLVCLSLAI) threads the bilayer. The Cytoplasmic portion of the chain corresponds to 230-248 (SRSIMDTFDEPDDYRGYYS).

Belongs to the tetraspanin (TM4SF) family.

Its subcellular location is the membrane. Its function is as follows. May be involved in the regulation of cell differentiation. This chain is Tetraspanin-16 (TET16), found in Arabidopsis thaliana (Mouse-ear cress).